The chain runs to 741 residues: Subtilisin-like protease SBT4.4 (741 aa).

The N-terminal stretch at 1–24 is a signal peptide; it reads MAKGTTFIFLFSSLLVLSLSSVSA. Residues 25–112 constitute a propeptide, activation peptide; the sequence is DKDDHGDQQV…VFPSRKLKLQ (88 aa). The 78-residue stretch at 34–111 folds into the Inhibitor I9 domain; the sequence is VYIVYLGSLP…SVFPSRKLKL (78 aa). Residues 116 to 589 form the Peptidase S8 domain; the sequence is SWNFMGLKEG…SGHVDPIDAI (474 aa). D144 functions as the Charge relay system in the catalytic mechanism. 2 N-linked (GlcNAc...) asparagine glycosylation sites follow: N175 and N195. H204 serves as the catalytic Charge relay system. 2 N-linked (GlcNAc...) asparagine glycosylation sites follow: N227 and N357. One can recognise a PA domain in the interval 359 to 445; that stretch reads TNYPLVYGKS…LSNDDYKSLV (87 aa). N-linked (GlcNAc...) asparagine glycosylation is present at N449. Catalysis depends on S528, which acts as the Charge relay system. Residues N565, N610, N623, and N654 are each glycosylated (N-linked (GlcNAc...) asparagine).

Belongs to the peptidase S8 family. Post-translationally, the C-terminal propeptide is autocleaved.

It localises to the secreted. In Arabidopsis thaliana (Mouse-ear cress), this protein is Subtilisin-like protease SBT4.4.